The sequence spans 326 residues: MLNKNIGYISPDYLYKYNSPINTEAILKIRQERQAKLFKFSHEKYYKAVQTIADIQSNFFDCSSAVIKVGHPEEISPGQKQRLYHCLQTFCPWKKGPFELFGVNIDAEWRSDWKWDRILPHISSIKNRKVADIGCHNGYFMFRMVDQQPELVIGFEPYSKHFWNFQLIQNIVKQKMLAFELLGVEHIHYYPQFFDTIFCLGILYHHTDPIGLLRKMRQALGPKGEVIIDCQGIPGDLPVALTPQKRYAQARGIWFLPTQSCLENWIGRAGFSDINCFFAAPLSVEEQRRTIWANIDSLPEFLDPHNPSLTVEGYPAPWRYYAIARK.

Residues Lys-95, Trp-109, Lys-114, Gly-134, 184-185, Tyr-204, and Arg-319 contribute to the carboxy-S-adenosyl-L-methionine site; that span reads VE.

It belongs to the class I-like SAM-binding methyltransferase superfamily. CmoB family.

It catalyses the reaction carboxy-S-adenosyl-L-methionine + 5-hydroxyuridine(34) in tRNA = 5-carboxymethoxyuridine(34) in tRNA + S-adenosyl-L-homocysteine + H(+). Functionally, catalyzes carboxymethyl transfer from carboxy-S-adenosyl-L-methionine (Cx-SAM) to 5-hydroxyuridine (ho5U) to form 5-carboxymethoxyuridine (cmo5U) at position 34 in tRNAs. In Trichodesmium erythraeum (strain IMS101), this protein is tRNA U34 carboxymethyltransferase.